A 443-amino-acid chain; its full sequence is UDP-N-acetylmuramate--L-alanine ligase (443 aa).

110 to 116 contacts ATP; the sequence is GAHGKTS.

Belongs to the MurCDEF family.

The protein localises to the cytoplasm. The catalysed reaction is UDP-N-acetyl-alpha-D-muramate + L-alanine + ATP = UDP-N-acetyl-alpha-D-muramoyl-L-alanine + ADP + phosphate + H(+). It participates in cell wall biogenesis; peptidoglycan biosynthesis. Cell wall formation. In Streptococcus equi subsp. equi (strain 4047), this protein is UDP-N-acetylmuramate--L-alanine ligase.